We begin with the raw amino-acid sequence, 56 residues long: RQSLGVPPQVKGPFQVVRPPLRTSVNSYTLPILQYIRALPLEVITNAFQISLEEAR.

The residue at position 45 (T45) is a Phosphothreonine.

The protein belongs to the 11S seed storage protein (globulins) family. Hexamer; each subunit is composed of an acidic and a basic chain derived from a single precursor and linked by a disulfide bond.

Its function is as follows. This is a seed storage protein. The sequence is that of Cruciferin from Sinapis alba (White mustard).